We begin with the raw amino-acid sequence, 311 residues long: HPr kinase/phosphorylase (311 aa).

Active-site residues include histidine 138 and lysine 159. Residue 153–160 (GKSGVGKS) participates in ATP binding. Serine 160 lines the Mg(2+) pocket. The Proton acceptor; for phosphorylation activity. Proton donor; for dephosphorylation activity role is filled by aspartate 177. An important for the catalytic mechanism of both phosphorylation and dephosphorylation region spans residues 201-210 (LEIRGLGIIN). Glutamate 202 provides a ligand contact to Mg(2+). Arginine 243 is an active-site residue. The tract at residues 264–269 (PVRPGR) is important for the catalytic mechanism of dephosphorylation.

This sequence belongs to the HPrK/P family. As to quaternary structure, homohexamer. It depends on Mg(2+) as a cofactor.

The catalysed reaction is [HPr protein]-L-serine + ATP = [HPr protein]-O-phospho-L-serine + ADP + H(+). It catalyses the reaction [HPr protein]-O-phospho-L-serine + phosphate + H(+) = [HPr protein]-L-serine + diphosphate. Its function is as follows. Catalyzes the ATP- as well as the pyrophosphate-dependent phosphorylation of a specific serine residue in HPr, a phosphocarrier protein of the phosphoenolpyruvate-dependent sugar phosphotransferase system (PTS). HprK/P also catalyzes the pyrophosphate-producing, inorganic phosphate-dependent dephosphorylation (phosphorolysis) of seryl-phosphorylated HPr (P-Ser-HPr). The two antagonistic activities of HprK/P are regulated by several intracellular metabolites, which change their concentration in response to the absence or presence of rapidly metabolisable carbon sources (glucose, fructose, etc.) in the growth medium. Also phosphorylates/dephosphorylates the HPr-like catabolite repression protein crh on a specific serine residue. Therefore, by controlling the phosphorylation state of HPr and crh, HPrK/P is a sensor enzyme that plays a major role in the regulation of carbon metabolism and sugar transport: it mediates carbon catabolite repression (CCR), and regulates PTS-catalyzed carbohydrate uptake and inducer exclusion. In Geobacillus kaustophilus (strain HTA426), this protein is HPr kinase/phosphorylase.